A 147-amino-acid polypeptide reads, in one-letter code: Phospholipase A2 inhibitor subunit B (147 aa).

One can recognise a C-type lectin domain in the interval 62–143; the sequence is EICEEAGGHI…DEKLLVVCEF (82 aa). Intrachain disulfides connect cysteine 64–cysteine 141 and cysteine 119–cysteine 133. A glycan (N-linked (GlcNAc...) asparagine) is linked at asparagine 103.

It belongs to the alpha-type phospholipase A2 inhibitor family. Homo- or heterotrimer; homotrimer of PLI-A chains, two PLI-A and one PLI-B chains, one PLI-A and two PLI-B chains, and homotrimer of PLI-B chains (with a ratio of 1:3:3:1). Expressed by the liver.

The protein localises to the secreted. Its function is as follows. PLI binds directly phospholipase A2 in the presence or absence of calcium. Inhibitory activity of the PLI-B homotrimer is less specific than that of the PLI-A homotrimer. The sequence is that of Phospholipase A2 inhibitor subunit B from Protobothrops flavoviridis (Habu).